A 193-amino-acid chain; its full sequence is T-cell receptor-associated transmembrane adapter 1 (193 aa).

The Extracellular portion of the chain corresponds to 1 to 10 (MSGNAECHFS). A helical; Signal-anchor for type III membrane protein membrane pass occupies residues 11–31 (IWAILAFLGLALTISLIFNIF). Topologically, residues 32 to 193 (HCVEKQRQEK…LHSLDYDLAQ (162 aa)) are cytoplasmic. Ser46 bears the Phosphoserine mark. Tyr80 carries the post-translational modification Phosphotyrosine. An interaction with PIK3R1 region spans residues 80–83 (YEQM). The interval 116 to 166 (NEGKRRKPRKQKSHLSDKDEEGQMHAKDISLSKTTLVDSYPPESEAIEENI) is disordered. Residues 119-128 (KRRKPRKQKS) are compositionally biased toward basic residues. The segment covering 129-145 (HLSDKDEEGQMHAKDIS) has biased composition (basic and acidic residues).

In terms of assembly, homodimer; disulfide-linked. Interacts with CD3Z. When phosphorylated, interacts with PIK3R1. Phosphorylated on tyrosines upon TCR activation.

The protein localises to the cell membrane. Stabilizes the TCR (T-cell antigen receptor)/CD3 complex at the surface of T-cells. In Bos taurus (Bovine), this protein is T-cell receptor-associated transmembrane adapter 1 (TRAT1).